The sequence spans 1319 residues: Probable membrane antigen 3 (1319 aa).

The protein localises to the virion tegument. The sequence is that of Probable membrane antigen 3 (3) from Equine herpesvirus 2 (strain 86/87) (EHV-2).